Reading from the N-terminus, the 404-residue chain is Serine/threonine transporter SstT (404 aa).

8 helical membrane-spanning segments follow: residues 17–37 (IGIGVVIGVMLGILAPDLTGF), 39–59 (ILGKLFVGGLKAIAPLLVFAL), 75–95 (MTLIIVLYLFGTFASALVAVL), 138–158 (ALATANYIGVLSWAIIFGLAL), 179–199 (IVVWIINLAPIGIMSLVFTTI), 212–232 (FLILVLVGTMVFVALVVNPLI), 287–307 (IPLGATINMGGAAITINVLTL), and 313–333 (FGIPIDFLTALLLSVVAAVSA).

It belongs to the dicarboxylate/amino acid:cation symporter (DAACS) (TC 2.A.23) family.

It is found in the cell membrane. The enzyme catalyses L-serine(in) + Na(+)(in) = L-serine(out) + Na(+)(out). It carries out the reaction L-threonine(in) + Na(+)(in) = L-threonine(out) + Na(+)(out). Its function is as follows. Involved in the import of serine and threonine into the cell, with the concomitant import of sodium (symport system). This chain is Serine/threonine transporter SstT, found in Streptococcus pyogenes serotype M12 (strain MGAS2096).